A 509-amino-acid polypeptide reads, in one-letter code: GRAS family protein RAD1 (509 aa).

The GRAS domain occupies Glu125 to Lys508. The segment at Met132–Val198 is leucine repeat I (LRI). Residues Tyr217 to Arg286 are VHIID. The VHIID motif lies at Val248–Asp252. Residues Ala299–Asp331 form a leucine repeat II (LRII) region. The interval Leu340–Asn431 is PFYRE. Positions Ser434–Lys508 are SAW.

This sequence belongs to the GRAS family. Interacts with RAM1 and NSP2. Expressed in roots under low phosphate (Pi) conditions.

The protein localises to the nucleus. Transcription factor acting as a regulator of arbuscular mycorrhiza (AM)-related genes (e.g. PT4, STR and RAM2). Required for the morphogenesis of arbuscules upon symbiosis with AM fungi (e.g. Rhizophagus irregularis). Also involved in restricting mycorrhizal colonization of the root meristem. The sequence is that of GRAS family protein RAD1 from Lotus japonicus (Lotus corniculatus var. japonicus).